A 332-amino-acid polypeptide reads, in one-letter code: MTTNSIRRIVVTAGEPAGIGPDLVLALSKEDWAHQIVVCADKNMLLERAKMLGIDVQLFDYNPEEAPKAQKAGTLIVDHVEIAENAIAGQLNEANGHYVLKTLERAALGCMNDEFDAIVTGPVHKGVINRAGVAFSGHTEFFAEKSNTPLVVMMLATEGLRVALVTTHIPLAYVSKAVTEERLEKIIDILHKDLVEKFAIAEPNIYVCGLNPHAGEDGCLGREEIETITPTLEKIQKEKGIKLIGPLPADTIFNEKYLNDADAVLGMYHDQVLPVLKYKGFGRSVNITLGLPFIRTSVDHGTALELAGTGQADTGSFRTALTHAIELVEKKQ.

Substrate-binding residues include His138 and Thr139. Residues His168, His213, and His269 each coordinate a divalent metal cation. 3 residues coordinate substrate: Lys277, Asn286, and Arg295.

The protein belongs to the PdxA family. In terms of assembly, homodimer. Requires Zn(2+) as cofactor. The cofactor is Mg(2+). Co(2+) is required as a cofactor.

The protein resides in the cytoplasm. The catalysed reaction is 4-(phosphooxy)-L-threonine + NAD(+) = 3-amino-2-oxopropyl phosphate + CO2 + NADH. It participates in cofactor biosynthesis; pyridoxine 5'-phosphate biosynthesis; pyridoxine 5'-phosphate from D-erythrose 4-phosphate: step 4/5. Catalyzes the NAD(P)-dependent oxidation of 4-(phosphooxy)-L-threonine (HTP) into 2-amino-3-oxo-4-(phosphooxy)butyric acid which spontaneously decarboxylates to form 3-amino-2-oxopropyl phosphate (AHAP). This chain is 4-hydroxythreonine-4-phosphate dehydrogenase, found in Vibrio parahaemolyticus serotype O3:K6 (strain RIMD 2210633).